The following is a 1034-amino-acid chain: Glycine dehydrogenase (decarboxylating), mitochondrial (1034 aa).

The N-terminal 63 residues, methionine 1–threonine 63, are a transit peptide targeting the mitochondrion. Lysine 770 bears the N6-(pyridoxal phosphate)lysine mark.

Belongs to the GcvP family. Homodimer. The glycine cleavage system is composed of four proteins: P, T, L and H. Pyridoxal 5'-phosphate serves as cofactor.

It is found in the mitochondrion. It carries out the reaction N(6)-[(R)-lipoyl]-L-lysyl-[glycine-cleavage complex H protein] + glycine + H(+) = N(6)-[(R)-S(8)-aminomethyldihydrolipoyl]-L-lysyl-[glycine-cleavage complex H protein] + CO2. Its function is as follows. The glycine cleavage system catalyzes the degradation of glycine. The P protein binds the alpha-amino group of glycine through its pyridoxal phosphate cofactor; CO(2) is released and the remaining methylamine moiety is then transferred to the lipoamide cofactor of the H protein. The chain is Glycine dehydrogenase (decarboxylating), mitochondrial (GDCSP) from Flaveria anomala (Yellowtops).